The chain runs to 183 residues: ATP-dependent protease subunit HslV (183 aa).

The active site involves threonine 10. Residues alanine 164, cysteine 167, and threonine 170 each contribute to the Na(+) site.

Belongs to the peptidase T1B family. HslV subfamily. A double ring-shaped homohexamer of HslV is capped on each side by a ring-shaped HslU homohexamer. The assembly of the HslU/HslV complex is dependent on binding of ATP.

The protein resides in the cytoplasm. It carries out the reaction ATP-dependent cleavage of peptide bonds with broad specificity.. With respect to regulation, allosterically activated by HslU binding. In terms of biological role, protease subunit of a proteasome-like degradation complex believed to be a general protein degrading machinery. The polypeptide is ATP-dependent protease subunit HslV (Rhizorhabdus wittichii (strain DSM 6014 / CCUG 31198 / JCM 15750 / NBRC 105917 / EY 4224 / RW1) (Sphingomonas wittichii)).